A 229-amino-acid polypeptide reads, in one-letter code: 2-C-methyl-D-erythritol 4-phosphate cytidylyltransferase (229 aa).

It belongs to the IspD/TarI cytidylyltransferase family. IspD subfamily.

It catalyses the reaction 2-C-methyl-D-erythritol 4-phosphate + CTP + H(+) = 4-CDP-2-C-methyl-D-erythritol + diphosphate. It functions in the pathway isoprenoid biosynthesis; isopentenyl diphosphate biosynthesis via DXP pathway; isopentenyl diphosphate from 1-deoxy-D-xylulose 5-phosphate: step 2/6. Functionally, catalyzes the formation of 4-diphosphocytidyl-2-C-methyl-D-erythritol from CTP and 2-C-methyl-D-erythritol 4-phosphate (MEP). This is 2-C-methyl-D-erythritol 4-phosphate cytidylyltransferase from Shouchella clausii (strain KSM-K16) (Alkalihalobacillus clausii).